The following is a 142-amino-acid chain: UPF0306 protein Ent638_3591 (142 aa).

Belongs to the UPF0306 family.

The polypeptide is UPF0306 protein Ent638_3591 (Enterobacter sp. (strain 638)).